Here is a 541-residue protein sequence, read N- to C-terminus: Chaperonin GroEL 2 (541 aa).

Residues 29–32 (TLGP), 86–90 (DGTTT), Gly-413, 476–478 (NAA), and Asp-492 each bind ATP.

It belongs to the chaperonin (HSP60) family. Forms a cylinder of 14 subunits composed of two heptameric rings stacked back-to-back. Interacts with the co-chaperonin GroES.

It localises to the secreted. The protein localises to the capsule. It is found in the cell surface. The protein resides in the cell wall. The enzyme catalyses ATP + H2O + a folded polypeptide = ADP + phosphate + an unfolded polypeptide.. Together with its co-chaperonin GroES, plays an essential role in assisting protein folding. The GroEL-GroES system forms a nano-cage that allows encapsulation of the non-native substrate proteins and provides a physical environment optimized to promote and accelerate protein folding. The protein is Chaperonin GroEL 2 of Mycolicibacterium gilvum (strain PYR-GCK) (Mycobacterium gilvum (strain PYR-GCK)).